We begin with the raw amino-acid sequence, 330 residues long: Diacylglycerol acyltransferase/mycolyltransferase Ag85B (330 aa).

Positions 1-40 (MTDLSKKVRAWGRRLLVGTAAAVTLPGLIGLAGGAPTAGA) are cleaved as a signal peptide. Position 82-83 (82-83 (LR)) interacts with substrate. The interval 98-108 (FEWYYQSGLSI) is fibronectin-binding. A disulfide bridge links C127 with C132. Substrate contacts are provided by S166 and D194. The active-site Nucleophile is S166. Residue E270 is part of the active site. Residues 272 to 275 (FVRS), K279, and 302 to 304 (HSW) each bind substrate. The active site involves H302.

This sequence belongs to the mycobacterial A85 antigen family.

It localises to the secreted. The catalysed reaction is 2 alpha,alpha'-trehalose 6-mycolate = alpha,alpha'-trehalose 6,6'-bismycolate + alpha,alpha-trehalose. It carries out the reaction an acyl-CoA + a 1,2-diacyl-sn-glycerol = a triacyl-sn-glycerol + CoA. Functionally, the antigen 85 proteins (FbpA, FbpB, FbpC) are responsible for the high affinity of mycobacteria for fibronectin, a large adhesive glycoprotein, which facilitates the attachment of M.tuberculosis to murine alveolar macrophages (AMs). They also help to maintain the integrity of the cell wall by catalyzing the transfer of mycolic acids to cell wall arabinogalactan and through the synthesis of alpha,alpha-trehalose dimycolate (TDM, cord factor). They catalyze the transfer of a mycoloyl residue from one molecule of alpha,alpha-trehalose monomycolate (TMM) to another TMM, leading to the formation of TDM. The chain is Diacylglycerol acyltransferase/mycolyltransferase Ag85B (fbpB) from Mycobacterium scrofulaceum.